We begin with the raw amino-acid sequence, 219 residues long: Probable nicotinate-nucleotide adenylyltransferase (219 aa).

The protein belongs to the NadD family.

It carries out the reaction nicotinate beta-D-ribonucleotide + ATP + H(+) = deamido-NAD(+) + diphosphate. It functions in the pathway cofactor biosynthesis; NAD(+) biosynthesis; deamido-NAD(+) from nicotinate D-ribonucleotide: step 1/1. In terms of biological role, catalyzes the reversible adenylation of nicotinate mononucleotide (NaMN) to nicotinic acid adenine dinucleotide (NaAD). This is Probable nicotinate-nucleotide adenylyltransferase from Pseudomonas putida (strain GB-1).